We begin with the raw amino-acid sequence, 596 residues long: ATP-binding protein Uup (596 aa).

2 consecutive ABC transporter domains span residues methionine 1–lysine 222 and phenylalanine 290–asparagine 516. ATP-binding positions include glycine 36–serine 43 and glycine 322–serine 329. The tract at residues isoleucine 519–isoleucine 596 is C-terminal domain (CTD), binds DNA.

This sequence belongs to the ABC transporter superfamily. ABCF family. Uup subfamily.

It localises to the cytoplasm. The enzyme catalyses ATP + H2O = ADP + phosphate + H(+). Probably plays a role in ribosome assembly or function. May be involved in resolution of branched DNA intermediates that result from template switching in postreplication gaps. Binds DNA and has ATPase activity. This chain is ATP-binding protein Uup, found in Buchnera aphidicola subsp. Acyrthosiphon pisum (strain APS) (Acyrthosiphon pisum symbiotic bacterium).